The following is a 358-amino-acid chain: Golgi-resident adenosine 3',5'-bisphosphate 3'-phosphatase (358 aa).

Methionine 1 carries the N-acetylmethionine modification. Topologically, residues 1–12 are cytoplasmic; sequence MAPMGIRLSPLG. The helical transmembrane segment at 13–33 threads the bilayer; sequence VAVFCLLGLGVLYHLYSGFLA. At 34–358 the chain is on the lumenal side; sequence GRFSLFGLGG…KLPDLEKMGH (325 aa). A disordered region spans residues 85 to 106; it reads RESNVLHEKSKGKTREGADDKM. The active-site Proton acceptor is the aspartate 110. Positions 133, 174, 176, and 177 each coordinate Mg(2+). The Proton acceptor role is filled by threonine 179. Positions 242 and 245 each coordinate AMP. A glycan (N-linked (GlcNAc...) asparagine) is linked at asparagine 259. The AMP site is built by glycine 268 and lysine 272. Aspartate 300 contributes to the Mg(2+) binding site.

It belongs to the inositol monophosphatase superfamily. The cofactor is Mg(2+). In terms of processing, contains N-linked glycan resistant to endoglycosydase H.

The protein localises to the golgi apparatus. Its subcellular location is the trans-Golgi network membrane. It carries out the reaction adenosine 3',5'-bisphosphate + H2O = AMP + phosphate. Its pathway is sulfur metabolism. Its activity is regulated as follows. Strongly inhibited by lithium. Functionally, exhibits 3'-nucleotidase activity toward adenosine 3',5'-bisphosphate (PAP), namely hydrolyzes adenosine 3',5'-bisphosphate into adenosine 5'-monophosphate (AMP) and a phosphate. May play a role in the formation of skeletal elements derived through endochondral ossification, possibly by clearing adenosine 3',5'-bisphosphate produced by Golgi sulfotransferases during glycosaminoglycan sulfation. Has no activity toward 3'-phosphoadenosine 5'-phosphosulfate (PAPS) or inositol phosphate (IP) substrates including I(1)P, I(1,4)P2, I(1,3,4)P3, I(1,4,5)P3 and I(1,3,4,5)P4. In Callithrix jacchus (White-tufted-ear marmoset), this protein is Golgi-resident adenosine 3',5'-bisphosphate 3'-phosphatase (BPNT2).